A 370-amino-acid polypeptide reads, in one-letter code: Sphingosine 1-phosphate receptor 2 (370 aa).

Topologically, residues 1–57 (MTTCRLFAGFCQAVTMSKYSQYFNKTLIQVHYLTAKEMTAEELRDRIESKQSLSSLN) are extracellular. The N-linked (GlcNAc...) asparagine glycan is linked to Asn24. Residues 58-78 (ILFVVICSIIILENLLVLIAV) form a helical membrane-spanning segment. At 79-87 (FRNKKFHSA) the chain is on the cytoplasmic side. A helical transmembrane segment spans residues 88–108 (MFFFIGNLAFSDLLAGSAYIA). Topologically, residues 109-128 (NIFLSGPRTFHLTPVQWFIR) are extracellular. Residues 129-149 (EGTAFIALSASVFSLLAIAIE) form a helical membrane-spanning segment. The Cytoplasmic portion of the chain corresponds to 150 to 167 (RYIAITKVKVYGSNKTCR). Residues 168-193 (MFLLIGACWVMSILLGGLPIIGWNCI) form a helical membrane-spanning segment. The Extracellular portion of the chain corresponds to 194–219 (NNLDDCSAVLPLNTRYYIRFVVTIFS). A helical transmembrane segment spans residues 220–230 (IILLSIVILYV). Residues 231-254 (RIYLIVRTSHQEATNSPAYALLKT) are Cytoplasmic-facing. A helical membrane pass occupies residues 255–275 (VTIVLGVFIICWLPAFTILLL). Over 276 to 289 (DTSCKMKQCPILNN) the chain is Extracellular. A helical membrane pass occupies residues 290-310 (AGIFFSFATLNSALNPLIYTL). Residues 311 to 370 (RSKDMRKEFLRVLCCWGLLNCGRPPHRCMVPLKSSSSMEHCTNKHEHQSIPIMQDCTTCV) lie on the Cytoplasmic side of the membrane. The S-palmitoyl cysteine moiety is linked to residue Cys325.

Belongs to the G-protein coupled receptor 1 family.

It localises to the cell membrane. Receptor for the lysosphingolipid sphingosine 1-phosphate (S1P). S1P receptor is critical for cell migration and epithelial integrity during vertebrate embryogenesis. Receptor for the chemokine-like protein FAM19A5. Mediates the inhibitory effect of FAM19A5 on vascular smooth muscle cell proliferation and migration. This Danio rerio (Zebrafish) protein is Sphingosine 1-phosphate receptor 2 (s1pr2).